The primary structure comprises 316 residues: Melanocyte-stimulating hormone receptor (316 aa).

Over Met-1–Glu-37 the chain is Extracellular. Asn-29 carries an N-linked (GlcNAc...) asparagine glycan. The chain crosses the membrane as a helical span at residues Val-38–Ile-63. Over Ala-64–Pro-72 the chain is Cytoplasmic. Residues Met-73–Leu-93 traverse the membrane as a helical segment. The Extracellular segment spans residues Glu-94 to Asn-118. A helical transmembrane segment spans residues Thr-119 to Val-140. The Cytoplasmic portion of the chain corresponds to Asp-141–Arg-163. Residues Val-164–Tyr-183 form a helical membrane-spanning segment. Over Glu-184–Cys-191 the chain is Extracellular. The helical transmembrane segment at Leu-192–Leu-210 threads the bilayer. Over Ala-211–Ala-239 the chain is Cytoplasmic. The chain crosses the membrane as a helical span at residues Ala-240–Phe-265. Topologically, residues Cys-266–Asn-278 are extracellular. The chain crosses the membrane as a helical span at residues Phe-279–Phe-299. The Cytoplasmic portion of the chain corresponds to Arg-300–Trp-316. Cys-314 carries S-palmitoyl cysteine lipidation.

Belongs to the G-protein coupled receptor 1 family. Interacts with MGRN1, but does not undergo MGRN1-mediated ubiquitination; this interaction competes with GNAS-binding and thus inhibits agonist-induced cAMP production. Interacts with OPN3; the interaction results in a decrease in MC1R-mediated cAMP signaling and ultimately a decrease in melanin production in melanocytes.

Its subcellular location is the cell membrane. In terms of biological role, receptor for MSH (alpha, beta and gamma) and ACTH. The activity of this receptor is mediated by G proteins which activate adenylate cyclase. Mediates melanogenesis, the production of eumelanin (black/brown) and phaeomelanin (red/yellow), via regulation of cAMP signaling in melanocytes. This is Melanocyte-stimulating hormone receptor (MC1R) from Cebus albifrons (White-fronted capuchin).